A 182-amino-acid polypeptide reads, in one-letter code: Probable RNA 2'-phosphotransferase (182 aa).

This sequence belongs to the KptA/TPT1 family.

Removes the 2'-phosphate from RNA via an intermediate in which the phosphate is ADP-ribosylated by NAD followed by a presumed transesterification to release the RNA and generate ADP-ribose 1''-2''-cyclic phosphate (APPR&gt;P). May function as an ADP-ribosylase. The sequence is that of Probable RNA 2'-phosphotransferase from Trichormus variabilis (strain ATCC 29413 / PCC 7937) (Anabaena variabilis).